The sequence spans 364 residues: Mannose-1-phosphate guanyltransferase (364 aa).

Belongs to the transferase hexapeptide repeat family.

The protein resides in the cytoplasm. It catalyses the reaction alpha-D-mannose 1-phosphate + GTP + H(+) = GDP-alpha-D-mannose + diphosphate. It functions in the pathway nucleotide-sugar biosynthesis; GDP-alpha-D-mannose biosynthesis; GDP-alpha-D-mannose from alpha-D-mannose 1-phosphate (GTP route): step 1/1. Its function is as follows. Involved in cell wall synthesis where it is required for glycosylation. Involved in cell cycle progression through cell-size checkpoint. The sequence is that of Mannose-1-phosphate guanyltransferase (mpg1) from Emericella nidulans (strain FGSC A4 / ATCC 38163 / CBS 112.46 / NRRL 194 / M139) (Aspergillus nidulans).